The chain runs to 459 residues: UDP-glycosyltransferase 78D3 (459 aa).

UDP-alpha-D-glucose contacts are provided by residues 338 to 340 (APQ), 355 to 363 (HGGWNSVLE), and 377 to 380 (FGDH).

This sequence belongs to the UDP-glycosyltransferase family.

Its function is as follows. Possesses low quercetin 3-O-glucosyltransferase activity in vitro. In Arabidopsis thaliana (Mouse-ear cress), this protein is UDP-glycosyltransferase 78D3 (UGT78D3).